Here is a 336-residue protein sequence, read N- to C-terminus: UPF0324 membrane protein lp_2841 (336 aa).

9 helical membrane-spanning segments follow: residues 5-22 (GILP…ISQG), 26-48 (FVPA…NTFL), 84-106 (IGGF…ALWL), 116-138 (VRML…IAPV), 150-172 (ITLV…MAVF), 204-226 (TVQF…VLIF), 255-277 (WYVA…AIIG), 282-304 (TISS…LVNF), and 311-333 (LALY…ITLL).

The protein belongs to the UPF0324 family.

Its subcellular location is the cell membrane. In Lactiplantibacillus plantarum (strain ATCC BAA-793 / NCIMB 8826 / WCFS1) (Lactobacillus plantarum), this protein is UPF0324 membrane protein lp_2841.